The primary structure comprises 1024 residues: PH and SEC7 domain-containing protein 1 (1024 aa).

4 disordered regions span residues 25–98 (WLPE…GAQS), 113–230 (PLNG…EVSS), 246–401 (SLDP…GPDS), and 430–536 (ASPG…LDST). The span at 71–95 (RGPPSPRVAPSPWAPSSPTGQPPPG) shows a compositional bias: pro residues. Ser-126 and Ser-156 each carry phosphoserine. Polar residues predominate over residues 215 to 230 (FLNQGDTWSSPREVSS). The span at 300 to 313 (DIDEVLAEREEADS) shows a compositional bias: acidic residues. The segment covering 327-342 (TAYPPAPRPGPLPGPH) has biased composition (pro residues). Residues 349-369 (NEDEDDDEAGGEEDVDDEVFE) are compositionally biased toward acidic residues. The span at 445–463 (PPQPPAPRPDPPAPAPLAP) shows a compositional bias: pro residues. The region spanning 512 to 706 (GAAPLGSEPP…KALYSSIKNE (195 aa)) is the SEC7 domain. Residue Ser-720 is modified to Phosphoserine. The 114-residue stretch at 756–869 (AVYKHGALVR…WITRINVVAA (114 aa)) folds into the PH domain. Residues 898–924 (LSQEEQVRTHEAKLKAMASELREHRAA) adopt a coiled-coil conformation. Residues 976–1024 (ALAQAGSTEDGLPPSHSSPSLQPKPSSQPRAQRHSSEPRPGAGSGRRKP) are disordered. Positions 987-1004 (LPPSHSSPSLQPKPSSQP) are enriched in low complexity.

It belongs to the PSD family. As to quaternary structure, interacts with ACTN1. Interacts (ARF6-bound form) with KCNK1; does not interact with KCNK1 in the absence of ARF6. Isoform 2 is expressed in the brain.

Its subcellular location is the cell membrane. The protein resides in the cell projection. It is found in the ruffle membrane. The protein localises to the cleavage furrow. Functionally, guanine nucleotide exchange factor for ARF6. Induces cytoskeletal remodeling. The sequence is that of PH and SEC7 domain-containing protein 1 (PSD) from Homo sapiens (Human).